Here is a 304-residue protein sequence, read N- to C-terminus: Ornithine carbamoyltransferase (304 aa).

Carbamoyl phosphate is bound by residues 53-56 (STRT), Gln80, Arg104, and 131-134 (HPCQ). L-ornithine contacts are provided by residues Asn162, Asp219, and 223–224 (SM). Carbamoyl phosphate-binding positions include 259–260 (CL) and Arg287.

The protein belongs to the aspartate/ornithine carbamoyltransferase superfamily. OTCase family.

The protein localises to the cytoplasm. It catalyses the reaction carbamoyl phosphate + L-ornithine = L-citrulline + phosphate + H(+). The protein operates within amino-acid biosynthesis; L-arginine biosynthesis; L-arginine from L-ornithine and carbamoyl phosphate: step 1/3. Its function is as follows. Reversibly catalyzes the transfer of the carbamoyl group from carbamoyl phosphate (CP) to the N(epsilon) atom of ornithine (ORN) to produce L-citrulline. The protein is Ornithine carbamoyltransferase of Herminiimonas arsenicoxydans.